The sequence spans 274 residues: tRNA-cytidine(32) 2-sulfurtransferase (274 aa).

The PP-loop motif motif lies at Ser-40 to Ser-45. 3 residues coordinate [4Fe-4S] cluster: Cys-115, Cys-118, and Cys-206.

The protein belongs to the TtcA family. In terms of assembly, homodimer. Requires Mg(2+) as cofactor. It depends on [4Fe-4S] cluster as a cofactor.

Its subcellular location is the cytoplasm. The enzyme catalyses cytidine(32) in tRNA + S-sulfanyl-L-cysteinyl-[cysteine desulfurase] + AH2 + ATP = 2-thiocytidine(32) in tRNA + L-cysteinyl-[cysteine desulfurase] + A + AMP + diphosphate + H(+). Its pathway is tRNA modification. Functionally, catalyzes the ATP-dependent 2-thiolation of cytidine in position 32 of tRNA, to form 2-thiocytidine (s(2)C32). The sulfur atoms are provided by the cysteine/cysteine desulfurase (IscS) system. The protein is tRNA-cytidine(32) 2-sulfurtransferase of Pseudomonas fluorescens (strain Pf0-1).